The chain runs to 396 residues: CCA-adding enzyme (396 aa).

2 residues coordinate ATP: Gly-32 and Arg-35. Residues Gly-32 and Arg-35 each contribute to the CTP site. Positions 45 and 47 each coordinate Mg(2+). The ATP site is built by Arg-116, Asp-159, Arg-162, Arg-165, and Arg-168. CTP contacts are provided by Arg-116, Asp-159, Arg-162, Arg-165, and Arg-168.

Belongs to the tRNA nucleotidyltransferase/poly(A) polymerase family. Bacterial CCA-adding enzyme type 3 subfamily. In terms of assembly, homodimer. It depends on Mg(2+) as a cofactor.

The catalysed reaction is a tRNA precursor + 2 CTP + ATP = a tRNA with a 3' CCA end + 3 diphosphate. It catalyses the reaction a tRNA with a 3' CCA end + 2 CTP + ATP = a tRNA with a 3' CCACCA end + 3 diphosphate. In terms of biological role, catalyzes the addition and repair of the essential 3'-terminal CCA sequence in tRNAs without using a nucleic acid template. Adds these three nucleotides in the order of C, C, and A to the tRNA nucleotide-73, using CTP and ATP as substrates and producing inorganic pyrophosphate. tRNA 3'-terminal CCA addition is required both for tRNA processing and repair. Also involved in tRNA surveillance by mediating tandem CCA addition to generate a CCACCA at the 3' terminus of unstable tRNAs. While stable tRNAs receive only 3'-terminal CCA, unstable tRNAs are marked with CCACCA and rapidly degraded. This chain is CCA-adding enzyme, found in Lactobacillus delbrueckii subsp. bulgaricus (strain ATCC 11842 / DSM 20081 / BCRC 10696 / JCM 1002 / NBRC 13953 / NCIMB 11778 / NCTC 12712 / WDCM 00102 / Lb 14).